The following is a 460-amino-acid chain: Cysteine--tRNA ligase (460 aa).

Cys-28 provides a ligand contact to Zn(2+). The short motif at 30-40 is the 'HIGH' region element; that stretch reads MTVYDYCHLGH. Positions 209, 234, and 238 each coordinate Zn(2+). The short motif at 266–270 is the 'KMSKS' region element; it reads KMSKS. Lys-269 serves as a coordination point for ATP.

The protein belongs to the class-I aminoacyl-tRNA synthetase family. As to quaternary structure, monomer. Zn(2+) is required as a cofactor.

The protein localises to the cytoplasm. It carries out the reaction tRNA(Cys) + L-cysteine + ATP = L-cysteinyl-tRNA(Cys) + AMP + diphosphate. The polypeptide is Cysteine--tRNA ligase (Thioalkalivibrio sulfidiphilus (strain HL-EbGR7)).